Reading from the N-terminus, the 328-residue chain is BURP domain-containing protein 11 (328 aa).

One can recognise a BURP domain in the interval 74–318 (FFFRDALRPG…TKLSIVWVPR (245 aa)).

As to expression, expressed in roots.

This is BURP domain-containing protein 11 (BURP11) from Oryza sativa subsp. japonica (Rice).